Reading from the N-terminus, the 256-residue chain is 6-phosphogluconolactonase (256 aa).

It belongs to the glucosamine/galactosamine-6-phosphate isomerase family. 6-phosphogluconolactonase subfamily.

It catalyses the reaction 6-phospho-D-glucono-1,5-lactone + H2O = 6-phospho-D-gluconate + H(+). It functions in the pathway carbohydrate degradation; pentose phosphate pathway; D-ribulose 5-phosphate from D-glucose 6-phosphate (oxidative stage): step 2/3. Functionally, hydrolysis of 6-phosphogluconolactone to 6-phosphogluconate. In Chlamydia trachomatis serovar D (strain ATCC VR-885 / DSM 19411 / UW-3/Cx), this protein is 6-phosphogluconolactonase (pgl).